The sequence spans 325 residues: Sulfite dehydrogenase subunit C (325 aa).

Transmembrane regions (helical) follow at residues 5–25, 43–63, 87–107, 126–146, 165–185, 186–206, 266–286, and 290–310; these read FSVIFLTTLLGAGQGLYLAMV, FYAVGSLVALLLLIAGLGASF, EVIVLPIVMALVFAYGVAHWF, LLLGVLGTIASLALFVCTAMI, FLFLGAASGFMLAAAYSAYIG, NPLVTFYGTWAVILTLVGLAS, VYLVLVFPIPVLLIGLSYLIG, and LPIIAFFVQFAGLLIERWSFF.

Belongs to the DmsC family. As to quaternary structure, forms a heterotrimeric membrane-bound complex composed of a catalytic heterodimer (SoeAB) and a membrane anchor protein (SoeC).

It is found in the cell inner membrane. Its function is as follows. Part of the SoeABC complex that catalyzes the oxidation of sulfite to sulfate. SoeC probably anchors and stabilizes the catalytic subunits. This chain is Sulfite dehydrogenase subunit C, found in Allochromatium vinosum (strain ATCC 17899 / DSM 180 / NBRC 103801 / NCIMB 10441 / D) (Chromatium vinosum).